The chain runs to 334 residues: Beta-ketoacyl-[acyl-carrier-protein] synthase III (334 aa).

Active-site residues include C114 and H253. Positions 254-258 are ACP-binding; it reads QANIR. N283 is a catalytic residue.

This sequence belongs to the thiolase-like superfamily. FabH family. In terms of assembly, homodimer.

The protein resides in the cytoplasm. It carries out the reaction malonyl-[ACP] + acetyl-CoA + H(+) = 3-oxobutanoyl-[ACP] + CO2 + CoA. Its pathway is lipid metabolism; fatty acid biosynthesis. Functionally, catalyzes the condensation reaction of fatty acid synthesis by the addition to an acyl acceptor of two carbons from malonyl-ACP. Catalyzes the first condensation reaction which initiates fatty acid synthesis and may therefore play a role in governing the total rate of fatty acid production. Possesses both acetoacetyl-ACP synthase and acetyl transacylase activities. Its substrate specificity determines the biosynthesis of branched-chain and/or straight-chain of fatty acids. This chain is Beta-ketoacyl-[acyl-carrier-protein] synthase III, found in Campylobacter concisus (strain 13826).